The primary structure comprises 223 residues: Ribose-5-phosphate isomerase A (223 aa).

Residues threonine 26–threonine 29, aspartate 82–aspartate 85, and lysine 95–glycine 98 each bind substrate. The active-site Proton acceptor is the glutamate 104. Lysine 122 is a binding site for substrate.

The protein belongs to the ribose 5-phosphate isomerase family. In terms of assembly, homodimer.

It carries out the reaction aldehydo-D-ribose 5-phosphate = D-ribulose 5-phosphate. The protein operates within carbohydrate degradation; pentose phosphate pathway; D-ribose 5-phosphate from D-ribulose 5-phosphate (non-oxidative stage): step 1/1. Functionally, catalyzes the reversible conversion of ribose-5-phosphate to ribulose 5-phosphate. The chain is Ribose-5-phosphate isomerase A from Streptococcus agalactiae serotype III (strain NEM316).